The following is a 204-amino-acid chain: Lysozyme g (204 aa).

The signal sequence occupies residues 1–19; that stretch reads MHLMLVLLGLAALLGTSQS. Intrachain disulfides connect Cys-23/Cys-79 and Cys-37/Cys-48. Active-site residues include Glu-92 and Asp-105.

It belongs to the glycosyl hydrolase 23 family.

The protein resides in the secreted. The catalysed reaction is Hydrolysis of (1-&gt;4)-beta-linkages between N-acetylmuramic acid and N-acetyl-D-glucosamine residues in a peptidoglycan and between N-acetyl-D-glucosamine residues in chitodextrins.. Functionally, has bacteriolytic activity against M.luteus. In Struthio camelus (Common ostrich), this protein is Lysozyme g.